We begin with the raw amino-acid sequence, 277 residues long: Large ribosomal subunit protein uL2 (277 aa).

Disordered regions lie at residues 35-60 and 225-277; these read EKQSKKAGRNNNGHITTRHQGGGHKQ and MNPV…ANKR. A compositionally biased stretch (polar residues) spans 43–53; sequence RNNNGHITTRH.

The protein belongs to the universal ribosomal protein uL2 family. In terms of assembly, part of the 50S ribosomal subunit. Forms a bridge to the 30S subunit in the 70S ribosome.

Its function is as follows. One of the primary rRNA binding proteins. Required for association of the 30S and 50S subunits to form the 70S ribosome, for tRNA binding and peptide bond formation. It has been suggested to have peptidyltransferase activity; this is somewhat controversial. Makes several contacts with the 16S rRNA in the 70S ribosome. This is Large ribosomal subunit protein uL2 from Methylobacillus flagellatus (strain ATCC 51484 / DSM 6875 / VKM B-1610 / KT).